The following is a 239-amino-acid chain: Large ribosomal subunit protein uL1 (239 aa).

The protein belongs to the universal ribosomal protein uL1 family. In terms of assembly, part of the 50S ribosomal subunit.

Functionally, binds directly to 23S rRNA. The L1 stalk is quite mobile in the ribosome, and is involved in E site tRNA release. In terms of biological role, protein L1 is also a translational repressor protein, it controls the translation of the L11 operon by binding to its mRNA. This chain is Large ribosomal subunit protein uL1, found in Rhodococcus erythropolis (strain PR4 / NBRC 100887).